The chain runs to 148 residues: Protein ADM2 (148 aa).

Positions 1 to 24 (MARIPTAALGCISLLCLQLPGSLS) are cleaved as a signal peptide. Positions 25–98 (RSLGGDPRPV…HSGPRRHSGP (74 aa)) are excised as a propeptide. 2 disordered regions span residues 26–57 (SLGGDPRPVKPREPPARSPSSSLQPRHPAPRP) and 70–101 (RGAGLAPVMGQPLRDGGRQHSGPRRHSGPRRT). Cys110 and Cys115 are oxidised to a cystine. Tyr147 carries the post-translational modification Tyrosine amide.

The protein belongs to the adrenomedullin family. As to expression, expressed in the esophagus, stomach, jejunum, ileum, ileocecum, ascending colon, transverse colon, descending colon and rectum. Expressed in myocardial cells of the heart, renal tubular cells, hypothalamus, and pituitary.

The protein localises to the secreted. Intermedin/ADM2 is a peptide hormone that plays a role as physiological regulator of gastrointestinal and cardiovascular bioactivities mediated by the CALCRL-RAMPs receptor complexes. Activates the cAMP-dependent pathway through interaction with CALCRL-RAMP3 receptor complex. The polypeptide is Protein ADM2 (Homo sapiens (Human)).